We begin with the raw amino-acid sequence, 664 residues long: Lamin tail domain-containing protein 2 (664 aa).

Residues 1-40 form a disordered region; that stretch reads MAPKSCQESEDKQVSPAPAGVQPDSSDLGSPVGTPVDRVA. Residues 118–169 adopt a coiled-coil conformation; the sequence is QDKFLRNQVQKLTLELKAQKEQAQQEKQQLEEKLQQNLWAKQQLEAELQTFQ. Polar residues predominate over residues 245 to 260; it reads SDQKQSQPPTSETYTL. Disordered regions lie at residues 245–272 and 286–329; these read SDQKQSQPPTSETYTLDSEGATKHTEKP and TSSS…MQEH. The segment covering 286–298 has biased composition (low complexity); that stretch reads TSSSERTQSDTSS. Positions 312 to 325 are enriched in polar residues; the sequence is GHPSQGTNLASSEQ. The LTD domain maps to 362–481; it reads PYTRPQLNPF…QVLSEHQATP (120 aa). The segment at 504 to 563 is disordered; sequence SESEPDVHPGEQQCRPSSPQKGRAKDAGARRKKPGPGVRQHRHSSTSGLRASRTLHPTET. The segment covering 533-547 has biased composition (basic residues); that stretch reads RRKKPGPGVRQHRHS.

In Mus musculus (Mouse), this protein is Lamin tail domain-containing protein 2 (Lmntd2).